The chain runs to 867 residues: Leucine--tRNA ligase (867 aa).

Positions 43–53 (PYPSGRLHMGH) match the 'HIGH' region motif. The 'KMSKS' region motif lies at 627–631 (KMSKS). Lys630 contributes to the ATP binding site.

The protein belongs to the class-I aminoacyl-tRNA synthetase family.

It localises to the cytoplasm. The enzyme catalyses tRNA(Leu) + L-leucine + ATP = L-leucyl-tRNA(Leu) + AMP + diphosphate. This is Leucine--tRNA ligase from Phenylobacterium zucineum (strain HLK1).